Reading from the N-terminus, the 383-residue chain is Na(+)/H(+) antiporter NhaA (383 aa).

The next 11 membrane-spanning stretches (helical) occupy residues 10-30, 56-76, 91-111, 121-141, 150-170, 174-194, 206-226, 254-274, 289-308, 327-347, and 355-375; these read LIGGLILFSAALLAIVVNNSP, LMHWINDGLMAIYFLYIGLEI, IITPAIAAFAGLAMPSLIYLS, GWAIPSATDIAFTLGILALLG, LLVITIAIFDDIAAIAIIAIF, SLSLLSLSLGTLFILAMIICN, VVLGFFAWFCTIKSGVHATLA, PWIIYFILPVFAFANAGISFS, IIWGLFVGKQLGIFSILAVF, GISLLCGIGFTMSLFIGVLAF, and AIKIGVVVGSVLSGFFGYIVL.

This sequence belongs to the NhaA Na(+)/H(+) (TC 2.A.33) antiporter family.

It localises to the cell inner membrane. The catalysed reaction is Na(+)(in) + 2 H(+)(out) = Na(+)(out) + 2 H(+)(in). In terms of biological role, na(+)/H(+) antiporter that extrudes sodium in exchange for external protons. In Francisella tularensis subsp. holarctica (strain FTNF002-00 / FTA), this protein is Na(+)/H(+) antiporter NhaA.